A 134-amino-acid chain; its full sequence is ATP synthase epsilon chain (134 aa).

It belongs to the ATPase epsilon chain family. As to quaternary structure, F-type ATPases have 2 components, CF(1) - the catalytic core - and CF(0) - the membrane proton channel. CF(1) has five subunits: alpha(3), beta(3), gamma(1), delta(1), epsilon(1). CF(0) has three main subunits: a, b and c.

It is found in the cell membrane. Its function is as follows. Produces ATP from ADP in the presence of a proton gradient across the membrane. The polypeptide is ATP synthase epsilon chain (Pelotomaculum thermopropionicum (strain DSM 13744 / JCM 10971 / SI)).